Reading from the N-terminus, the 374-residue chain is L-serine/homoserine O-acetyltransferase (374 aa).

In terms of domain architecture, AB hydrolase-1 spans 46–357; sequence AVLVLTGLSP…TPAGHDAFLV (312 aa). The active-site Nucleophile is serine 149. Catalysis depends on residues aspartate 319 and histidine 352.

The protein belongs to the AB hydrolase superfamily. MetX family. As to quaternary structure, homodimer.

The protein resides in the cytoplasm. The catalysed reaction is L-serine + acetyl-CoA = O-acetyl-L-serine + CoA. The enzyme catalyses L-homoserine + acetyl-CoA = O-acetyl-L-homoserine + CoA. It participates in antibiotic biosynthesis. Functionally, involved in the biosynthesis of the antibiotic D-cycloserine (DCS), a cyclic structural analog of D-alanine, used as an antitubercular agent. Catalyzes the transfer of the acetyl group from acetyl-CoA to the hydroxyl group of L-serine to yield the activated serine, O-acetyl-L-serine. It prefers L-serine over L-homoserine. In Streptomyces lavendulae, this protein is L-serine/homoserine O-acetyltransferase.